Consider the following 649-residue polypeptide: Transcription factor E2-alpha (649 aa).

Disordered regions lie at residues 37–107 (RPAS…SERN), 132–207 (GLSS…AKTP), 296–325 (TYSG…SSSG), and 339–376 (DHSS…ALSP). The segment covering 57-71 (SESWGNSEQNSSSFD) has biased composition (polar residues). Residues 132 to 148 (GLSSPGPLSPSGVKSSS) show a composition bias toward low complexity. Serine 135 and serine 140 each carry phosphoserine. The Nuclear localization signal signature appears at 171–177 (PKKVRKV). The span at 339–352 (DHSSNNFSPSPSTP) shows a compositional bias: low complexity. The residue at position 351 (threonine 351) is a Phosphothreonine. Residue serine 355 is modified to Phosphoserine. The residue at position 367 (arginine 367) is an Omega-N-methylarginine. Serine 375 is subject to Phosphoserine. Residues 385–420 (LSKMEDRLDEAIHVLRSHAVGTASELHGLLPGHSTL) form a leucine-zipper region. The tract at residues 435–547 (AGLVSGSHPE…KAEREKERRV (113 aa)) is disordered. The span at 459-477 (SLPSQPSSLPDLSQRPPDS) shows a compositional bias: low complexity. Residue lysine 494 forms a Glycyl lysine isopeptide (Lys-Gly) (interchain with G-Cter in SUMO2) linkage. Position 524 is a phosphoserine (serine 524). The residue at position 526 (aspartate 526) is a Phosphothreonine. Over residues 537–547 (QKAEREKERRV) the composition is skewed to basic and acidic residues. Positions 544–597 (ERRVANNARERLRVRDINEAFKELGRMCQLHLSTEKPQTKLLILHQAVAVILSL) constitute a bHLH domain. A Glycyl lysine isopeptide (Lys-Gly) (interchain with G-Cter in SUMO2) cross-link involves residue lysine 620.

Homodimer. Heterodimer; efficient DNA binding requires dimerization with another bHLH protein. Forms a heterodimer with TWIST1 and TWIST2. Forms a heterodimer with NEUROD1; the heterodimer is inhibited in presence of ID2, but not NR0B2, to E-box element. Forms a heterodimer with TCF15; the heterodimer binds E-box element. Forms a heterodimer with MYOG; heterodimerization enhances MYOG DNA-binding and transcriptional activities. Forms a heterodimer with ATOH8; repress transcription of TCF3 and TCF3-NEUROG3 dimer-induced transactivation of E box-dependent promoters. Component of a nuclear TAL-1 complex composed at least of CBFA2T3, LDB1, TAL1 and TCF3. Interacts with NEUROD2. Interacts with EP300. Interacts with PTF1A, TGFB1I1. Interacts with UBE2I. Interacts with BHLHA9. Interacts with ASB2; the interaction is mediated by SKP2 and targets TCF3 for Notch-induced proteasomal degradation. Interacts with transcription factor ASCL5/AmeloD. As to quaternary structure, interacts with RALGAPA1. Interacts with FIGLA. In terms of assembly, forms a heterodimer with ATOH7; required for ATOH7 DNA-binding. In terms of processing, phosphorylated following NGF stimulation. Post-translationally, undergoes Notch-induced ubiquitination and subsequent proteasomal degradation which is mediated by ASB1 or ASB2, the substrate-recognition components of probable ECS E3 ubiquitin-protein ligase complexes.

It is found in the nucleus. Transcriptional regulator involved in the initiation of neuronal differentiation and mesenchymal to epithelial transition. Heterodimers between TCF3 and tissue-specific basic helix-loop-helix (bHLH) proteins play major roles in determining tissue-specific cell fate during embryogenesis, like muscle or early B-cell differentiation. Together with TCF15, required for the mesenchymal to epithelial transition. Dimers bind DNA on E-box motifs: 5'-CANNTG-3'. Binds to the kappa-E2 site in the kappa immunoglobulin gene enhancer. Binds to the consensus sequence CAC/GCTGT/C present, in the chymotrypsin, insulin, AP-4, and several other gene enhancer motifs. In terms of biological role, facilitates ATOH7 binding to DNA at the consensus sequence 5'-CAGGTG-3', and positively regulates transcriptional activity. This is Transcription factor E2-alpha (Tcf3) from Rattus norvegicus (Rat).